The following is a 30-amino-acid chain: Bowman-Birk type proteinase inhibitor 3 (30 aa).

2 disulfides stabilise this stretch: cysteine 9/cysteine 24 and cysteine 14/cysteine 22.

Functionally, inhibits trypsin (IC(50)=4.90 nM) and, to a lesser extent, alpha-chymotrypsin (IC(50)=1.87 uM). The sequence is that of Bowman-Birk type proteinase inhibitor 3 from Lathyrus sativus (White vetchling).